The chain runs to 662 residues: U6 snRNA-specific terminal uridylyltransferase (662 aa).

Residues aspartate 183 and aspartate 185 each contribute to the Mg(2+) site. In terms of domain architecture, PAP-associated spans 384 to 437; the sequence is CKFFRELFKYYANFDFTNKAIYGKKAMQKKTLSSAHGGVEESPLMLMDPMDITH.

This sequence belongs to the DNA polymerase type-B-like family. In terms of assembly, forms a complex composed of sart-3, terminal uridylyltransferase usip-1 and U6 snRNA; complex formation is mediated by usip-1 and sart-3 binding to U6 snRNA. It depends on Mg(2+) as a cofactor. Mn(2+) is required as a cofactor. As to expression, ubiquitously expressed.

It localises to the nucleus. The protein localises to the nucleoplasm. The catalysed reaction is RNA(n) + UTP = RNA(n)-3'-uridine ribonucleotide + diphosphate. Functionally, acts as a specific terminal uridylyltransferase for U6 snRNA. Responsible for the addition of UTP at the 3' end of U6 snRNA which stabilizes U6 snRNA. Does not have activity towards modified uridine containing 3'-monophosphorylation or 2'-O-methylation. This is U6 snRNA-specific terminal uridylyltransferase from Caenorhabditis elegans.